A 173-amino-acid chain; its full sequence is PTS system glucose-specific EIIA component (173 aa).

Positions 40 to 144 (DPTFAQKMMG…STVTPVVVTN (105 aa)) constitute a PTS EIIA type-1 domain. The Zn(2+) site is built by His77 and His92. Catalysis depends on His92, which acts as the Tele-phosphohistidine intermediate; for EIIA activity. His92 carries the phosphohistidine; by HPr modification.

Heterodimer with glycerol kinase (glpk). Zn(2+) serves as cofactor.

It is found in the cytoplasm. Functionally, the phosphoenolpyruvate-dependent sugar phosphotransferase system (sugar PTS), a major carbohydrate active transport system, catalyzes the phosphorylation of incoming sugar substrates concomitantly with their translocation across the cell membrane. The enzyme II complex composed of PtsG and Crr is involved in glucose transport. The protein is PTS system glucose-specific EIIA component (crr) of Halalkalibacterium halodurans (strain ATCC BAA-125 / DSM 18197 / FERM 7344 / JCM 9153 / C-125) (Bacillus halodurans).